A 780-amino-acid polypeptide reads, in one-letter code: Gelsolin (780 aa).

Residue methionine 1 is modified to N-acetylmethionine; alternate. The signal sequence occupies residues methionine 1–alanine 25. Residues valine 51–phenylalanine 174 form an actin-severing region. The Gelsolin-like 1 repeat unit spans residues phenylalanine 74–phenylalanine 155. Tyrosine 84 carries the phosphotyrosine modification. Glycine 90, aspartate 91, glutamate 122, aspartate 134, glycine 139, and alanine 141 together coordinate Ca(2+). Residues aspartate 121–glycine 124 form an actin-actin interfilament contact point region. Residue lysine 160–lysine 167 participates in a 1,2-diacyl-sn-glycero-3-phospho-(1D-myo-inositol-4,5-bisphosphate) binding. Valine 170 provides a ligand contact to Ca(2+). Arginine 186 to arginine 194 contacts a 1,2-diacyl-sn-glycero-3-phospho-(1D-myo-inositol-4,5-bisphosphate). One copy of the Gelsolin-like 2 repeat lies at valine 196–methionine 268. Ca(2+) contacts are provided by glycine 211 and aspartate 212. Cysteine 213 and cysteine 226 are disulfide-bonded. Position 234 (glutamate 234) interacts with Ca(2+). The segment at glycine 244–leucine 269 is disordered. Residues aspartate 284, glutamate 327, aspartate 328, and glutamate 352 each contribute to the Ca(2+) site. The Gelsolin-like 3 repeat unit spans residues aspartate 315–phenylalanine 387. Phosphotyrosine is present on residues tyrosine 407 and tyrosine 463. The actin-binding, Ca-sensitive stretch occupies residues alanine 432–alanine 780. A Gelsolin-like 4 repeat occupies serine 453–methionine 534. Ca(2+)-binding residues include glycine 469, aspartate 470, glutamate 500, aspartate 512, glycine 517, proline 519, and threonine 549. The Gelsolin-like 5 repeat unit spans residues arginine 575–tryptophan 640. Residue lysine 582 is modified to N6-acetyllysine. Ca(2+) is bound by residues asparagine 589 and aspartate 590. The residue at position 601 (tyrosine 601) is a Phosphotyrosine. Glutamate 612 is a Ca(2+) binding site. Tyrosine 649 is modified (phosphotyrosine). The stretch at isoleucine 679 to phenylalanine 754 is one Gelsolin-like 6 repeat. Positions 694, 695, and 717 each coordinate Ca(2+). Residue threonine 740 is modified to Phosphothreonine.

It belongs to the villin/gelsolin family. Binds to actin and to fibronectin. Identified in a complex composed of ACTA1, COBL, GSN and TMSB4X. Interacts with the inactive form of EIF2AK2/PKR. Interacts with FLII. Phosphorylated on tyrosine residues in vitro.

It localises to the cytoplasm. The protein resides in the cytoskeleton. The protein localises to the secreted. Functionally, calcium-regulated, actin-modulating protein that binds to the plus (or barbed) ends of actin monomers or filaments, preventing monomer exchange (end-blocking or capping). It can promote the assembly of monomers into filaments (nucleation) as well as sever filaments already formed. Plays a role in ciliogenesis. This is Gelsolin (Gsn) from Mus musculus (Mouse).